A 636-amino-acid chain; its full sequence is Methionine--tRNA ligase (636 aa).

The 'HIGH' region motif lies at 12-22 (YYVNGDPHVGS). C127, C130, C145, and C148 together coordinate Zn(2+). A 'KMSKS' region motif is present at residues 298-302 (KMSKS). Position 301 (K301) interacts with ATP. In terms of domain architecture, tRNA-binding spans 535 to 636 (EFNKIEIKVV…KTVEAGAIVS (102 aa)).

The protein belongs to the class-I aminoacyl-tRNA synthetase family. MetG type 2A subfamily. Homodimer. It depends on Zn(2+) as a cofactor.

Its subcellular location is the cytoplasm. The catalysed reaction is tRNA(Met) + L-methionine + ATP = L-methionyl-tRNA(Met) + AMP + diphosphate. Its function is as follows. Is required not only for elongation of protein synthesis but also for the initiation of all mRNA translation through initiator tRNA(fMet) aminoacylation. This is Methionine--tRNA ligase (metG) from Fusobacterium nucleatum subsp. nucleatum (strain ATCC 25586 / DSM 15643 / BCRC 10681 / CIP 101130 / JCM 8532 / KCTC 2640 / LMG 13131 / VPI 4355).